We begin with the raw amino-acid sequence, 428 residues long: Putative F-box protein At3g22421 (428 aa).

The F-box domain maps to 4–50 (TTTISHLPTELLDEIISRVPLKSTRAVRLTCKNWDSLFKNRSFMKEE).

This is Putative F-box protein At3g22421 from Arabidopsis thaliana (Mouse-ear cress).